The chain runs to 567 residues: Urease subunit alpha (567 aa).

The region spanning 129 to 567 (GGIDAHIHFI…LPMAQRYFLF (439 aa)) is the Urease domain. Residues His134, His136, and Lys217 each contribute to the Ni(2+) site. Lys217 carries the N6-carboxylysine modification. A substrate-binding site is contributed by His219. Positions 246 and 272 each coordinate Ni(2+). The active-site Proton donor is His320. Position 360 (Asp360) interacts with Ni(2+).

The protein belongs to the metallo-dependent hydrolases superfamily. Urease alpha subunit family. In terms of assembly, heterotrimer of UreA (gamma), UreB (beta) and UreC (alpha) subunits. Three heterotrimers associate to form the active enzyme. The cofactor is Ni cation. In terms of processing, carboxylation allows a single lysine to coordinate two nickel ions.

It is found in the cytoplasm. The enzyme catalyses urea + 2 H2O + H(+) = hydrogencarbonate + 2 NH4(+). The protein operates within nitrogen metabolism; urea degradation; CO(2) and NH(3) from urea (urease route): step 1/1. In Teredinibacter turnerae (strain ATCC 39867 / T7901), this protein is Urease subunit alpha.